Reading from the N-terminus, the 537-residue chain is CTP synthase (537 aa).

An amidoligase domain region spans residues 1 to 269; sequence MNQTKYIFVT…DVVALKKLDL (269 aa). S15 serves as a coordination point for CTP. S15 contributes to the UTP binding site. 16–21 provides a ligand contact to ATP; it reads SLGKGI. Y56 is a binding site for L-glutamine. D73 provides a ligand contact to ATP. Residues D73 and E143 each contribute to the Mg(2+) site. CTP contacts are provided by residues 150–152, 190–195, and K226; these read DIE and KTKPTQ. UTP contacts are provided by residues 190–195 and K226; that span reads KTKPTQ. Residues 295 to 537 form the Glutamine amidotransferase type-1 domain; that stretch reads NIGLVGKYVE…VAAAVNAHKK (243 aa). G357 contributes to the L-glutamine binding site. C384 (nucleophile; for glutamine hydrolysis) is an active-site residue. L-glutamine is bound by residues 385–388, E408, and R465; that span reads LGMQ. Active-site residues include H510 and E512.

The protein belongs to the CTP synthase family. In terms of assembly, homotetramer.

The catalysed reaction is UTP + L-glutamine + ATP + H2O = CTP + L-glutamate + ADP + phosphate + 2 H(+). It catalyses the reaction L-glutamine + H2O = L-glutamate + NH4(+). The enzyme catalyses UTP + NH4(+) + ATP = CTP + ADP + phosphate + 2 H(+). The protein operates within pyrimidine metabolism; CTP biosynthesis via de novo pathway; CTP from UDP: step 2/2. With respect to regulation, allosterically activated by GTP, when glutamine is the substrate; GTP has no effect on the reaction when ammonia is the substrate. The allosteric effector GTP functions by stabilizing the protein conformation that binds the tetrahedral intermediate(s) formed during glutamine hydrolysis. Inhibited by the product CTP, via allosteric rather than competitive inhibition. Catalyzes the ATP-dependent amination of UTP to CTP with either L-glutamine or ammonia as the source of nitrogen. Regulates intracellular CTP levels through interactions with the four ribonucleotide triphosphates. The polypeptide is CTP synthase (Flavobacterium johnsoniae (strain ATCC 17061 / DSM 2064 / JCM 8514 / BCRC 14874 / CCUG 350202 / NBRC 14942 / NCIMB 11054 / UW101) (Cytophaga johnsonae)).